The chain runs to 282 residues: Lipoyl synthase (282 aa).

The [4Fe-4S] cluster site is built by Cys-37, Cys-42, Cys-48, Cys-63, Cys-67, Cys-70, and Ser-274. A Radical SAM core domain is found at 49–263 (WGKGTATFMI…KTIGLEKGFS (215 aa)).

Belongs to the radical SAM superfamily. Lipoyl synthase family. The cofactor is [4Fe-4S] cluster.

Its subcellular location is the cytoplasm. It carries out the reaction [[Fe-S] cluster scaffold protein carrying a second [4Fe-4S](2+) cluster] + N(6)-octanoyl-L-lysyl-[protein] + 2 oxidized [2Fe-2S]-[ferredoxin] + 2 S-adenosyl-L-methionine + 4 H(+) = [[Fe-S] cluster scaffold protein] + N(6)-[(R)-dihydrolipoyl]-L-lysyl-[protein] + 4 Fe(3+) + 2 hydrogen sulfide + 2 5'-deoxyadenosine + 2 L-methionine + 2 reduced [2Fe-2S]-[ferredoxin]. It participates in protein modification; protein lipoylation via endogenous pathway; protein N(6)-(lipoyl)lysine from octanoyl-[acyl-carrier-protein]: step 2/2. Functionally, catalyzes the radical-mediated insertion of two sulfur atoms into the C-6 and C-8 positions of the octanoyl moiety bound to the lipoyl domains of lipoate-dependent enzymes, thereby converting the octanoylated domains into lipoylated derivatives. The chain is Lipoyl synthase from Bacteroides thetaiotaomicron (strain ATCC 29148 / DSM 2079 / JCM 5827 / CCUG 10774 / NCTC 10582 / VPI-5482 / E50).